Here is a 358-residue protein sequence, read N- to C-terminus: 3-isopropylmalate dehydrogenase (358 aa).

77–90 provides a ligand contact to NAD(+); that stretch reads GPKWTHLPPDQQPE. Substrate contacts are provided by arginine 98, arginine 108, arginine 137, and aspartate 226. Mg(2+) is bound by residues aspartate 226, aspartate 250, and aspartate 254. 284–296 lines the NAD(+) pocket; it reads GSAPDIAGKGIAN.

The protein belongs to the isocitrate and isopropylmalate dehydrogenases family. LeuB type 1 subfamily. In terms of assembly, homodimer. The cofactor is Mg(2+). Requires Mn(2+) as cofactor.

The protein resides in the cytoplasm. It carries out the reaction (2R,3S)-3-isopropylmalate + NAD(+) = 4-methyl-2-oxopentanoate + CO2 + NADH. Its pathway is amino-acid biosynthesis; L-leucine biosynthesis; L-leucine from 3-methyl-2-oxobutanoate: step 3/4. Catalyzes the oxidation of 3-carboxy-2-hydroxy-4-methylpentanoate (3-isopropylmalate) to 3-carboxy-4-methyl-2-oxopentanoate. The product decarboxylates to 4-methyl-2 oxopentanoate. The sequence is that of 3-isopropylmalate dehydrogenase from Mannheimia succiniciproducens (strain KCTC 0769BP / MBEL55E).